Reading from the N-terminus, the 286-residue chain is Beta-lactamase SHV-2 (286 aa).

Residues 1–21 (MRYIRLCIISLLATLPLAVHA) form the signal peptide. Residue Ser-66 is the Acyl-ester intermediate of the active site. Cysteines 73 and 119 form a disulfide. The Proton acceptor role is filled by Glu-164. 230–232 (KTG) serves as a coordination point for substrate.

This sequence belongs to the class-A beta-lactamase family.

The catalysed reaction is a beta-lactam + H2O = a substituted beta-amino acid. This enzyme hydrolyzes cefotaxime, ceftazidime and other broad spectrum cephalosporins. The protein is Beta-lactamase SHV-2 (bla) of Klebsiella pneumoniae.